The sequence spans 338 residues: MEQLRAAARLQIVLGHLGRPSAGAVVAHPTSGTISSASFHPQQFQYTLDNNVLTLEQRKFYEENGFLVIKNLVPDADIQRFRNEFEKICRKEVKPLGLTVMRDVTISKSEYAPSEKMITKVQDFQEDKELFRYCTLPEILKYVECFTGPNIMAMHTMLINKPPDSGKKTSRHPLHQDLHYFPFRPSDLIVCAWTAMEHISRNNGCLVVLPGTHKGSLKPHDYPKWEGGVNKMFHGIQDYEENKARVHLVMEKGDTVFFHPLLIHGSGQNKTQGFRKAISCHFASADCHYIDVKGTSQENIEKEVVGIAHKFFGAENSVNLKDIWMFRARLVKGERTNL.

The N-terminal 30 residues, 1-30 (MEQLRAAARLQIVLGHLGRPSAGAVVAHPT), are a transit peptide targeting the peroxisome. 2 positions are modified to N6-succinyllysine: Lys59 and Lys108. 2-oxoglutarate contacts are provided by residues Lys120, Met157, 175–177 (HQD), and Trp193. Fe cation-binding residues include His175 and Asp177. N6-succinyllysine is present on residues Lys231 and Lys252. His264 is a binding site for Fe cation. Positions 266 and 275 each coordinate 2-oxoglutarate. Ser317 is subject to Phosphoserine.

The protein belongs to the PhyH family. Interacts with FKBP52. Interacts with PHYHIP. Fe cation is required as a cofactor. It depends on L-ascorbate as a cofactor. Requires ATP as cofactor. The cofactor is Mg(2+). In terms of tissue distribution, expressed in liver, kidney, and T-cells, but not in spleen, brain, heart, lung and skeletal muscle.

The protein resides in the peroxisome. The catalysed reaction is phytanoyl-CoA + 2-oxoglutarate + O2 = 2-hydroxyphytanoyl-CoA + succinate + CO2. It carries out the reaction 3-methylhexadecanoyl-CoA + 2-oxoglutarate + O2 = 2-hydroxy-3-methylhexadecanoyl-CoA + succinate + CO2. The enzyme catalyses hexadecanoyl-CoA + 2-oxoglutarate + O2 = 2-hydroxyhexadecanoyl-CoA + succinate + CO2. It catalyses the reaction octanoyl-CoA + 2-oxoglutarate + O2 = 2-hydroxyoctanoyl-CoA + succinate + CO2. The catalysed reaction is decanoyl-CoA + 2-oxoglutarate + O2 = 2-hydroxydecanoyl-CoA + succinate + CO2. It carries out the reaction 3-methylbutanoyl-CoA + 2-oxoglutarate + O2 = 2-hydroxy-3-methylbutanoyl-CoA + succinate + CO2. The enzyme catalyses heptadecanoyl-CoA + 2-oxoglutarate + O2 = 2-hydroxyheptadecanoyl-CoA + succinate + CO2. It catalyses the reaction eicosanoyl-CoA + 2-oxoglutarate + O2 = 2-hydroxyeicosanoyl-CoA + succinate + CO2. The catalysed reaction is octadecanoyl-CoA + 2-oxoglutarate + O2 = 2-hydroxyoctadecanoyl-CoA + succinate + CO2. It carries out the reaction dodecanoyl-CoA + 2-oxoglutarate + O2 = 2-hydroxydodecanoyl-CoA + succinate + CO2. The enzyme catalyses tetradecanoyl-CoA + 2-oxoglutarate + O2 = 2-hydroxytetradecanoyl-CoA + succinate + CO2. It catalyses the reaction hexanoyl-CoA + 2-oxoglutarate + O2 = 2-hydroxyhexanoyl-CoA + succinate + CO2. The catalysed reaction is butanoyl-CoA + 2-oxoglutarate + O2 = 2-hydroxybutanoyl-CoA + succinate + CO2. It carries out the reaction 3-methylnonanoyl-CoA + 2-oxoglutarate + O2 = 2-hydroxy-3-methylnonanoyl-CoA + succinate + CO2. The enzyme catalyses 3-methylundecanoyl-CoA + 2-oxoglutarate + O2 = 2-hydroxy-3-methylundecanoyl-CoA + succinate + CO2. It catalyses the reaction 3-methyldodecanoyl-CoA + 2-oxoglutarate + O2 = 2-hydroxy-3-methyldodecanoyl-CoA + succinate + CO2. The protein operates within lipid metabolism; fatty acid metabolism. Catalyzes the 2-hydroxylation of not only racemic phytanoyl-CoA and the isomers of 3-methylhexadecanoyl-CoA, but also a variety of other mono-branched 3-methylacyl-CoA esters (with a chain length of at least seven carbon atoms) and straight-chain acyl-CoA esters (with a chain length longer than four carbon atoms). Does not hydroxylate long and very long straight chain acyl-CoAs or 2-methyl- and 4-methyl-branched acyl-CoAs. In Homo sapiens (Human), this protein is Phytanoyl-CoA dioxygenase, peroxisomal (PHYH).